The following is a 574-amino-acid chain: Sulfate adenylyltransferase (574 aa).

Positions 1-169 (MANTPHGGVL…IEAVNKLNHY (169 aa)) are N-terminal. The tract at residues 170-394 (DYVALRYTPA…LRESNPPRAS (225 aa)) is catalytic. Gln-197 is a binding site for sulfate. ATP-binding positions include 197 to 200 (QTRN) and 291 to 294 (GRDH). Residues Thr-198, Arg-199, and Asn-200 contribute to the active site. Arg-199 lines the sulfate pocket. Ala-295 is a sulfate binding site. Val-333 lines the ATP pocket. An allosteric regulation domain; adenylyl-sulfate kinase-like region spans residues 395–574 (QGFTIFLTGY…LESEGYFERL (180 aa)). Residues 434–437 (DTVR), Arg-451, 477–478 (IA), and Arg-516 each bind 3'-phosphoadenylyl sulfate.

In the N-terminal section; belongs to the sulfate adenylyltransferase family. The protein in the C-terminal section; belongs to the APS kinase family. In terms of assembly, homohexamer. Dimer of trimers.

The protein localises to the cytoplasm. The catalysed reaction is sulfate + ATP + H(+) = adenosine 5'-phosphosulfate + diphosphate. It participates in sulfur metabolism; hydrogen sulfide biosynthesis; sulfite from sulfate: step 1/3. Its activity is regulated as follows. Allosterically inhibited by 3'-phosphoadenosine 5'-phosphosulfate (PAPS). Catalyzes the first intracellular reaction of sulfate assimilation, forming adenosine-5'-phosphosulfate (APS) from inorganic sulfate and ATP. Plays an important role in sulfate activation as a component of the biosynthesis pathway of sulfur-containing amino acids. The protein is Sulfate adenylyltransferase of Aspergillus niger.